We begin with the raw amino-acid sequence, 718 residues long: Cyclomaltodextrin glucanotransferase (718 aa).

The first 34 residues, 1–34, serve as a signal peptide directing secretion; it reads MFQMAKRAFLSTTLTLGLLAGSALPFLPASAVYA. The interval 35 to 172 is A1; sequence DPDTAVTNKQ…GIKIVIDFAP (138 aa). Ca(2+) contacts are provided by aspartate 61, asparagine 63, asparagine 66, and asparagine 67. Cysteine 77 and cysteine 84 are disulfide-bonded. 2 residues coordinate Ca(2+): glycine 85 and aspartate 87. Substrate is bound at residue 134-135; sequence YW. Asparagine 173 is a Ca(2+) binding site. The tract at residues 173-236 is b; the sequence is NHTSPAMETD…NLYDLADFNH (64 aa). Histidine 174 serves as a coordination point for substrate. Isoleucine 224 lines the Ca(2+) pocket. Residues 227-230 and aspartate 230 each bind substrate; that span reads NLYD. A Ca(2+)-binding site is contributed by aspartate 233. The A2 stretch occupies residues 237–440; the sequence is NNATIDKYFK…LRKSNPAIAY (204 aa). A substrate-binding site is contributed by arginine 261. Catalysis depends on aspartate 263, which acts as the Nucleophile. Residues 266–267 and histidine 267 each bind substrate; that span reads KH. Histidine 267 is a Ca(2+) binding site. Catalysis depends on glutamate 291, which acts as the Proton donor. Substrate-binding residues include histidine 361, aspartate 405, and arginine 409. Positions 441–528 are c; sequence GSTQQRWINN…ATAVWQYTTA (88 aa). The tract at residues 529 to 614 is d; it reads ETTPTIGHVG…SNAYNNFTIL (86 aa). The IPT/TIG domain occupies 532–612; the sequence is PTIGHVGPVM…VNSNAYNNFT (81 aa). The region spanning 613–718 is the CBM20 domain; sequence ILTGDQVTVR…GTATVTVNWQ (106 aa). Residues 615–718 are e; that stretch reads TGDQVTVRFV…GTATVTVNWQ (104 aa).

It belongs to the glycosyl hydrolase 13 family. In terms of assembly, monomer. The cofactor is Ca(2+).

It localises to the secreted. The catalysed reaction is Cyclizes part of a (1-&gt;4)-alpha-D-glucan chain by formation of a (1-&gt;4)-alpha-D-glucosidic bond.. The chain is Cyclomaltodextrin glucanotransferase from Niallia circulans (Bacillus circulans).